We begin with the raw amino-acid sequence, 383 residues long: Galactokinase (383 aa).

Substrate is bound at residue 34 to 37 (EHTD). Residue 124–130 (GAGLSSS) coordinates ATP. Residues Ser-130 and Glu-162 each contribute to the Mg(2+) site. Asp-174 acts as the Proton acceptor in catalysis. A substrate-binding site is contributed by Tyr-223.

This sequence belongs to the GHMP kinase family. GalK subfamily.

Its subcellular location is the cytoplasm. The enzyme catalyses alpha-D-galactose + ATP = alpha-D-galactose 1-phosphate + ADP + H(+). Its pathway is carbohydrate metabolism; galactose metabolism. Catalyzes the transfer of the gamma-phosphate of ATP to D-galactose to form alpha-D-galactose-1-phosphate (Gal-1-P). The sequence is that of Galactokinase from Yersinia enterocolitica serotype O:8 / biotype 1B (strain NCTC 13174 / 8081).